Here is a 434-residue protein sequence, read N- to C-terminus: ATP-dependent protease ATPase subunit HslU (434 aa).

ATP-binding positions include Val18, 60-65 (GVGKTE), Asp247, Glu312, and Arg384.

The protein belongs to the ClpX chaperone family. HslU subfamily. In terms of assembly, a double ring-shaped homohexamer of HslV is capped on each side by a ring-shaped HslU homohexamer. The assembly of the HslU/HslV complex is dependent on binding of ATP.

The protein resides in the cytoplasm. ATPase subunit of a proteasome-like degradation complex; this subunit has chaperone activity. The binding of ATP and its subsequent hydrolysis by HslU are essential for unfolding of protein substrates subsequently hydrolyzed by HslV. HslU recognizes the N-terminal part of its protein substrates and unfolds these before they are guided to HslV for hydrolysis. The chain is ATP-dependent protease ATPase subunit HslU from Rhodopseudomonas palustris (strain BisB18).